A 519-amino-acid polypeptide reads, in one-letter code: General transcription factor 3C polypeptide 5 (519 aa).

A2 is subject to N-acetylalanine. The tract at residues 465-519 (ALFSSSAKADGGKEQLTYESGEDEEDEEEEEEEEEDFKPSDGSENEMETEILDYV) is disordered. 2 stretches are compositionally biased toward acidic residues: residues 484–500 (SGED…EEED) and 507–519 (SENE…LDYV).

It belongs to the TFIIIC subunit 5 family. In terms of assembly, part of the TFIIIC subcomplex TFIIIC2, consisting of six subunits, GTF3C1, GTF3C2, GTF3C3, GTF3C4, GTF3C5 and GTF3C6. Interacts with BRF1, GTF3C6 and TBP.

Its subcellular location is the nucleus. Its function is as follows. Involved in RNA polymerase III-mediated transcription. Integral, tightly associated component of the DNA-binding TFIIIC2 subcomplex that directly binds tRNA and virus-associated RNA promoters. This Homo sapiens (Human) protein is General transcription factor 3C polypeptide 5 (GTF3C5).